The following is a 165-amino-acid chain: Ubiquitin-fold modifier-conjugating enzyme 1 (165 aa).

Catalysis depends on C116, which acts as the Glycyl thioester intermediate.

It belongs to the ubiquitin-conjugating enzyme family. UFC1 subfamily.

E2-like enzyme which forms an intermediate with UFM1 via a thioester linkage. This is Ubiquitin-fold modifier-conjugating enzyme 1 from Drosophila mojavensis (Fruit fly).